Consider the following 237-residue polypeptide: Cyclic nucleotide phosphodiesterase inhibitor (237 aa).

An N-terminal signal peptide occupies residues 1–20; the sequence is MAKIIISLILLLSLFSFSYG. N-linked (GlcNAc...) asparagine glycosylation is found at asparagine 28, asparagine 65, and asparagine 70. 5 Cys-rich CT repeats span residues 57–81, 82–105, 116–139, 140–162, and 163–186; these read DLCH…CNDN, NPCT…CDPG, DPCT…CNDG, DACT…CDDN, and DPCT…CSIK. Asparagine 153 carries N-linked (GlcNAc...) asparagine glycosylation. Asparagine 207 carries an N-linked (GlcNAc...) asparagine glycan.

Functionally, PDI acts by binding stoichiometrically to cyclic nucleotide phosphodiesterase, changing the KM of the enzyme for cAMP from 10 uM to 2 mM. This Dictyostelium discoideum (Social amoeba) protein is Cyclic nucleotide phosphodiesterase inhibitor (pdiA).